The sequence spans 885 residues: Conidiophore development regulator abaA (885 aa).

Residues 1-20 (MSSLFQPRPVLSSQRYSQSP) show a composition bias toward polar residues. The tract at residues 1–25 (MSSLFQPRPVLSSQRYSQSPDYVDT) is disordered. Residues 124 to 217 (QKDKGGVWRR…QVVKKFFEDL (94 aa)) constitute a DNA-binding region (TEA). Disordered stretches follow at residues 502–539 (KEKRRKYADGDGKKELERAGSKRKRSEDEGDAASWTRR) and 817–885 (APGS…TAGW). Composition is skewed to basic and acidic residues over residues 508–521 (YADGDGKKELERAG) and 831–840 (VESHAGDHHG).

This sequence belongs to the TEC1 family.

It localises to the nucleus. Functionally, brlA, abaA and wetA are pivotal regulators of conidiophore development and conidium maturation. They act individually and together to regulate their own expression and that of numerous other sporulation-specific genes. BrlA, abaA and wetA act together to positively regulate the expression of the Pks1 gene cluster that mediates the biosynthesis of an anthraquinone derivative pigment that contributes to conidial pigmentation that provides protection from UV radiation, heat and cold stress. In Metarhizium robertsii (strain ARSEF 23 / ATCC MYA-3075) (Metarhizium anisopliae (strain ARSEF 23)), this protein is Conidiophore development regulator abaA.